The sequence spans 391 residues: NADH-quinone oxidoreductase subunit D (391 aa).

Belongs to the complex I 49 kDa subunit family. NDH-1 is composed of 14 different subunits. Subunits NuoB, C, D, E, F, and G constitute the peripheral sector of the complex.

The protein localises to the cell inner membrane. It catalyses the reaction a quinone + NADH + 5 H(+)(in) = a quinol + NAD(+) + 4 H(+)(out). NDH-1 shuttles electrons from NADH, via FMN and iron-sulfur (Fe-S) centers, to quinones in the respiratory chain. The immediate electron acceptor for the enzyme in this species is believed to be ubiquinone. Couples the redox reaction to proton translocation (for every two electrons transferred, four hydrogen ions are translocated across the cytoplasmic membrane), and thus conserves the redox energy in a proton gradient. The polypeptide is NADH-quinone oxidoreductase subunit D (Rickettsia massiliae (strain Mtu5)).